Reading from the N-terminus, the 471-residue chain is Argininosuccinate lyase (471 aa).

Belongs to the lyase 1 family. Argininosuccinate lyase subfamily.

The protein localises to the cytoplasm. The catalysed reaction is 2-(N(omega)-L-arginino)succinate = fumarate + L-arginine. It participates in amino-acid biosynthesis; L-arginine biosynthesis; L-arginine from L-ornithine and carbamoyl phosphate: step 3/3. The sequence is that of Argininosuccinate lyase from Renibacterium salmoninarum (strain ATCC 33209 / DSM 20767 / JCM 11484 / NBRC 15589 / NCIMB 2235).